We begin with the raw amino-acid sequence, 217 residues long: Phosphatidylserine decarboxylase proenzyme (217 aa).

S187 (schiff-base intermediate with substrate; via pyruvic acid) is an active-site residue. S187 carries the pyruvic acid (Ser); by autocatalysis modification.

The protein belongs to the phosphatidylserine decarboxylase family. PSD-A subfamily. In terms of assembly, heterodimer of a large membrane-associated beta subunit and a small pyruvoyl-containing alpha subunit. Pyruvate serves as cofactor. In terms of processing, is synthesized initially as an inactive proenzyme. Formation of the active enzyme involves a self-maturation process in which the active site pyruvoyl group is generated from an internal serine residue via an autocatalytic post-translational modification. Two non-identical subunits are generated from the proenzyme in this reaction, and the pyruvate is formed at the N-terminus of the alpha chain, which is derived from the carboxyl end of the proenzyme. The post-translation cleavage follows an unusual pathway, termed non-hydrolytic serinolysis, in which the side chain hydroxyl group of the serine supplies its oxygen atom to form the C-terminus of the beta chain, while the remainder of the serine residue undergoes an oxidative deamination to produce ammonia and the pyruvoyl prosthetic group on the alpha chain.

The protein resides in the cell membrane. The enzyme catalyses a 1,2-diacyl-sn-glycero-3-phospho-L-serine + H(+) = a 1,2-diacyl-sn-glycero-3-phosphoethanolamine + CO2. Its pathway is phospholipid metabolism; phosphatidylethanolamine biosynthesis; phosphatidylethanolamine from CDP-diacylglycerol: step 2/2. In terms of biological role, catalyzes the formation of phosphatidylethanolamine (PtdEtn) from phosphatidylserine (PtdSer). The chain is Phosphatidylserine decarboxylase proenzyme from Thermobifida fusca (strain YX).